The chain runs to 197 residues: Xanthine phosphoribosyltransferase (197 aa).

L20 and T27 together coordinate xanthine. Residue 128-132 (ANGQA) participates in 5-phospho-alpha-D-ribose 1-diphosphate binding. Xanthine is bound at residue K156.

It belongs to the purine/pyrimidine phosphoribosyltransferase family. Xpt subfamily. Homodimer.

Its subcellular location is the cytoplasm. It catalyses the reaction XMP + diphosphate = xanthine + 5-phospho-alpha-D-ribose 1-diphosphate. It participates in purine metabolism; XMP biosynthesis via salvage pathway; XMP from xanthine: step 1/1. In terms of biological role, converts the preformed base xanthine, a product of nucleic acid breakdown, to xanthosine 5'-monophosphate (XMP), so it can be reused for RNA or DNA synthesis. This Lactococcus lactis subsp. cremoris (strain SK11) protein is Xanthine phosphoribosyltransferase.